The chain runs to 239 residues: Aspartate/glutamate leucyltransferase (239 aa).

Belongs to the R-transferase family. Bpt subfamily.

The protein resides in the cytoplasm. It carries out the reaction N-terminal L-glutamyl-[protein] + L-leucyl-tRNA(Leu) = N-terminal L-leucyl-L-glutamyl-[protein] + tRNA(Leu) + H(+). The enzyme catalyses N-terminal L-aspartyl-[protein] + L-leucyl-tRNA(Leu) = N-terminal L-leucyl-L-aspartyl-[protein] + tRNA(Leu) + H(+). Its function is as follows. Functions in the N-end rule pathway of protein degradation where it conjugates Leu from its aminoacyl-tRNA to the N-termini of proteins containing an N-terminal aspartate or glutamate. The protein is Aspartate/glutamate leucyltransferase of Campylobacter jejuni (strain RM1221).